Here is a 461-residue protein sequence, read N- to C-terminus: Cysteine--tRNA ligase (461 aa).

A Zn(2+)-binding site is contributed by C29. Residues 31–41 carry the 'HIGH' region motif; sequence MTVYDFCHIGH. Zn(2+) is bound by residues C210, H235, and E239. The 'KMSKS' region signature appears at 267–271; sequence KMSKS. K270 provides a ligand contact to ATP.

The protein belongs to the class-I aminoacyl-tRNA synthetase family. In terms of assembly, monomer. The cofactor is Zn(2+).

Its subcellular location is the cytoplasm. The enzyme catalyses tRNA(Cys) + L-cysteine + ATP = L-cysteinyl-tRNA(Cys) + AMP + diphosphate. The protein is Cysteine--tRNA ligase of Stutzerimonas stutzeri (strain A1501) (Pseudomonas stutzeri).